Here is a 363-residue protein sequence, read N- to C-terminus: Ribosomal RNA large subunit methyltransferase M (363 aa).

S-adenosyl-L-methionine-binding positions include S190, 223–226, D242, D262, and D279; that span reads CPGG. The active-site Proton acceptor is the K308.

This sequence belongs to the class I-like SAM-binding methyltransferase superfamily. RNA methyltransferase RlmE family. RlmM subfamily. In terms of assembly, monomer.

The protein localises to the cytoplasm. The enzyme catalyses cytidine(2498) in 23S rRNA + S-adenosyl-L-methionine = 2'-O-methylcytidine(2498) in 23S rRNA + S-adenosyl-L-homocysteine + H(+). Catalyzes the 2'-O-methylation at nucleotide C2498 in 23S rRNA. The sequence is that of Ribosomal RNA large subunit methyltransferase M from Vibrio atlanticus (strain LGP32) (Vibrio splendidus (strain Mel32)).